The sequence spans 292 residues: Small ribosomal subunit biogenesis GTPase RsgA (292 aa).

Positions 65–223 (KTELIRPTVA…VVDTPGFSSL (159 aa)) constitute a CP-type G domain. GTP contacts are provided by residues 114-117 (NKLD) and 165-173 (GPSGVGKST). Zn(2+)-binding residues include cysteine 247, cysteine 252, histidine 254, and cysteine 260.

The protein belongs to the TRAFAC class YlqF/YawG GTPase family. RsgA subfamily. As to quaternary structure, monomer. Associates with 30S ribosomal subunit, binds 16S rRNA. It depends on Zn(2+) as a cofactor.

It is found in the cytoplasm. Functionally, one of several proteins that assist in the late maturation steps of the functional core of the 30S ribosomal subunit. Helps release RbfA from mature subunits. May play a role in the assembly of ribosomal proteins into the subunit. Circularly permuted GTPase that catalyzes slow GTP hydrolysis, GTPase activity is stimulated by the 30S ribosomal subunit. This Alkaliphilus metalliredigens (strain QYMF) protein is Small ribosomal subunit biogenesis GTPase RsgA.